The sequence spans 97 residues: Aspartyl/glutamyl-tRNA(Asn/Gln) amidotransferase subunit C (97 aa).

The interval 74 to 97 (AEQALDQAPASQRDRFEVPRILGE) is disordered. Residues 85-97 (QRDRFEVPRILGE) show a composition bias toward basic and acidic residues.

This sequence belongs to the GatC family. As to quaternary structure, heterotrimer of A, B and C subunits.

The catalysed reaction is L-glutamyl-tRNA(Gln) + L-glutamine + ATP + H2O = L-glutaminyl-tRNA(Gln) + L-glutamate + ADP + phosphate + H(+). It catalyses the reaction L-aspartyl-tRNA(Asn) + L-glutamine + ATP + H2O = L-asparaginyl-tRNA(Asn) + L-glutamate + ADP + phosphate + 2 H(+). In terms of biological role, allows the formation of correctly charged Asn-tRNA(Asn) or Gln-tRNA(Gln) through the transamidation of misacylated Asp-tRNA(Asn) or Glu-tRNA(Gln) in organisms which lack either or both of asparaginyl-tRNA or glutaminyl-tRNA synthetases. The reaction takes place in the presence of glutamine and ATP through an activated phospho-Asp-tRNA(Asn) or phospho-Glu-tRNA(Gln). The sequence is that of Aspartyl/glutamyl-tRNA(Asn/Gln) amidotransferase subunit C from Corynebacterium kroppenstedtii (strain DSM 44385 / JCM 11950 / CIP 105744 / CCUG 35717).